The sequence spans 291 residues: G1/S-specific cyclin-D2 (291 aa).

Residues Thr261–Leu291 form a disordered region. A compositionally biased stretch (polar residues) spans Gln279–Leu291. Thr282 carries the post-translational modification Phosphothreonine.

Belongs to the cyclin family. Cyclin D subfamily. In terms of assembly, interacts with the cdk4 and cdk6 protein kinases to form a serine/threonine kinase holoenzyme complex. The cyclin subunit imparts substrate specificity to the complex. Post-translationally, phosphorylation at Thr-282 by MAP kinases is required for ubiquitination and degradation by the DCX(AMBRA1) complex. Ubiquitinated by the DCX(AMBRA1) complex during the transition from G1 to S cell phase, leading to its degradation: ubiquitination is dependent on Thr-282 phosphorylation. The DCX(AMBRA1) complex represents the major regulator of CCND2 stability during the G1/S transition.

It localises to the nucleus. Its subcellular location is the cytoplasm. The protein resides in the nucleus membrane. Its function is as follows. Regulatory component of the cyclin D2-CDK4 (DC) complex that phosphorylates and inhibits members of the retinoblastoma (RB) protein family including RB1 and regulates the cell-cycle during G(1)/S transition. Phosphorylation of RB1 allows dissociation of the transcription factor E2F from the RB/E2F complex and the subsequent transcription of E2F target genes which are responsible for the progression through the G(1) phase. Hypophosphorylates RB1 in early G(1) phase. Cyclin D-CDK4 complexes are major integrators of various mitogenenic and antimitogenic signals. In Xenopus laevis (African clawed frog), this protein is G1/S-specific cyclin-D2 (ccnd2).